Reading from the N-terminus, the 428-residue chain is Glutamate-1-semialdehyde 2,1-aminomutase (428 aa).

Position 267 is an N6-(pyridoxal phosphate)lysine (K267).

It belongs to the class-III pyridoxal-phosphate-dependent aminotransferase family. HemL subfamily. In terms of assembly, homodimer. It depends on pyridoxal 5'-phosphate as a cofactor.

It localises to the cytoplasm. It carries out the reaction (S)-4-amino-5-oxopentanoate = 5-aminolevulinate. The protein operates within porphyrin-containing compound metabolism; protoporphyrin-IX biosynthesis; 5-aminolevulinate from L-glutamyl-tRNA(Glu): step 2/2. This chain is Glutamate-1-semialdehyde 2,1-aminomutase, found in Pelobacter propionicus (strain DSM 2379 / NBRC 103807 / OttBd1).